Reading from the N-terminus, the 413-residue chain is YYTPEYKTKDTDILAAFRMTPQPGVPAEEAGAAVAAESSTGTWTTVWTDGLTSLDRYKGRCYDIEPVAGEENQYIAYVAYPLDLFEEGSVTNMLTSIVGNVFGFKALRALRLEDLRIPPAYSKTFMGPPHGIQVERDKLNKYGRPLLGCTIKPKLGLSAKNYGRAVYECLRGGLDFTKDDENVNSQPFMRWRDRFLFVAEALFKSQAETGEIKGHYLNATAGTCEEMMKRAVFARELGAPIVMHDYLTGGFTANTSLAFYCRDNGLLLHIHRAMHAVIDRQRNHGIHFRVLAKALRMSGGDHIHAGTVVGKLEGEREVTLGFVDLLRDDYIEKDRSRGIYFTQDWVSMPGVFPVASGGIHVWHMPALTEIFGDDSVLQFGGGTLGHPWGNAPGAVANRVALEACVQARNEGRD.

Residues Asn100 and Thr150 each contribute to the substrate site. The active-site Proton acceptor is Lys152. Residue Lys154 participates in substrate binding. Mg(2+) is bound by residues Lys178, Asp180, and Glu181. The residue at position 178 (Lys178) is an N6-carboxylysine. The active-site Proton acceptor is the His271. Arg272, His304, and Ser356 together coordinate substrate.

It belongs to the RuBisCO large chain family. Type I subfamily. As to quaternary structure, heterohexadecamer of 8 large chains and 8 small chains; disulfide-linked. The disulfide link is formed within the large subunit homodimers. Mg(2+) is required as a cofactor. Post-translationally, the disulfide bond which can form in the large chain dimeric partners within the hexadecamer appears to be associated with oxidative stress and protein turnover.

The protein localises to the plastid. The protein resides in the chloroplast. The enzyme catalyses 2 (2R)-3-phosphoglycerate + 2 H(+) = D-ribulose 1,5-bisphosphate + CO2 + H2O. The catalysed reaction is D-ribulose 1,5-bisphosphate + O2 = 2-phosphoglycolate + (2R)-3-phosphoglycerate + 2 H(+). In terms of biological role, ruBisCO catalyzes two reactions: the carboxylation of D-ribulose 1,5-bisphosphate, the primary event in carbon dioxide fixation, as well as the oxidative fragmentation of the pentose substrate in the photorespiration process. Both reactions occur simultaneously and in competition at the same active site. This Adiantum pedatum (Northern maidenhair fern) protein is Ribulose bisphosphate carboxylase large chain (rbcL).